The primary structure comprises 37 residues: uncharacterized protein (37 aa).

This sequence belongs to the poxviridae A56.5 protein family.

This is an uncharacterized protein from Vaccinia virus (strain Western Reserve) (VACV).